We begin with the raw amino-acid sequence, 66 residues long: Metallothionein (66 aa).

S1 is subject to N-acetylserine. Positions 9, 13, 18, 20, 24, 26, 30, 32, 35, 38, 40, 45, 47, 51, 57, 59, 63, and 65 each coordinate Cd(2+).

This sequence belongs to the metallothionein superfamily. Type 2 family.

Functionally, the metallothioneins are involved in the cellular sequestration of toxic metal ions and regulation of essential trace elements. This is Metallothionein from Arianta arbustorum (Land snail).